Reading from the N-terminus, the 377-residue chain is MQQRVIVGMSGGVDSSVSAALLLQQGYQVEGLFMKNWEEDDGTEYCTAMEDLADAQAVADKIGIKLHTANFAMEYWDRVFEHFLAEYAAGRTPNPDILCNKEIKFRAFLDHAMTLGADFIATGHYARRAETAYNSKGEAYAPLLRGLDKNKDQTYFLHAVHGREINKTLFPVGEIEKPEVRRIAEELDLATAKKKDSTGICFIGERRFNDFLKQYLPAQPGKIVLDNGKEVGEHHGLMYYTLGQRGGIGLGGMKGASEGAWFVLHKDVANNRLVVGQGHDHPLMQSTQLWSEAIDWVAGEQNIPAEGLRCTAKTRYRQPDQACTVFIDENSEHGVRVEFDEPQRAVTPGQSVVFYSDEVCLGGGVIHHTNAPTPNFI.

Residues 8–15 (GMSGGVDS) and Met-34 each bind ATP. The interaction with target base in tRNA stretch occupies residues 94 to 96 (NPD). Catalysis depends on Cys-99, which acts as the Nucleophile. A disulfide bridge connects residues Cys-99 and Cys-201. Gly-123 contributes to the ATP binding site. The tract at residues 151 to 153 (KDQ) is interaction with tRNA. Cys-201 serves as the catalytic Cysteine persulfide intermediate. The segment at 315–316 (RY) is interaction with tRNA.

It belongs to the MnmA/TRMU family.

Its subcellular location is the cytoplasm. It carries out the reaction S-sulfanyl-L-cysteinyl-[protein] + uridine(34) in tRNA + AH2 + ATP = 2-thiouridine(34) in tRNA + L-cysteinyl-[protein] + A + AMP + diphosphate + H(+). Its function is as follows. Catalyzes the 2-thiolation of uridine at the wobble position (U34) of tRNA, leading to the formation of s(2)U34. The protein is tRNA-specific 2-thiouridylase MnmA of Acinetobacter baumannii (strain ACICU).